We begin with the raw amino-acid sequence, 235 residues long: Aspartate/glutamate leucyltransferase (235 aa).

This sequence belongs to the R-transferase family. Bpt subfamily.

Its subcellular location is the cytoplasm. It catalyses the reaction N-terminal L-glutamyl-[protein] + L-leucyl-tRNA(Leu) = N-terminal L-leucyl-L-glutamyl-[protein] + tRNA(Leu) + H(+). It carries out the reaction N-terminal L-aspartyl-[protein] + L-leucyl-tRNA(Leu) = N-terminal L-leucyl-L-aspartyl-[protein] + tRNA(Leu) + H(+). In terms of biological role, functions in the N-end rule pathway of protein degradation where it conjugates Leu from its aminoacyl-tRNA to the N-termini of proteins containing an N-terminal aspartate or glutamate. The sequence is that of Aspartate/glutamate leucyltransferase from Stutzerimonas stutzeri (strain A1501) (Pseudomonas stutzeri).